The following is a 614-amino-acid chain: Chaperone protein DnaK (614 aa).

Position 174 is a phosphothreonine; by autocatalysis (T174). The disordered stretch occupies residues Q576–K614. The span at G578–D589 shows a compositional bias: low complexity.

Belongs to the heat shock protein 70 family.

In terms of biological role, acts as a chaperone. The sequence is that of Chaperone protein DnaK from Desulfitobacterium hafniense (strain DSM 10664 / DCB-2).